Reading from the N-terminus, the 439-residue chain is Homogentisate 1,2-dioxygenase (439 aa).

Fe cation is bound by residues His-335, Glu-341, and His-371.

This sequence belongs to the homogentisate dioxygenase family. Fe cation serves as cofactor.

The catalysed reaction is homogentisate + O2 = 4-maleylacetoacetate + H(+). It participates in amino-acid degradation; L-phenylalanine degradation; acetoacetate and fumarate from L-phenylalanine: step 4/6. The polypeptide is Homogentisate 1,2-dioxygenase (Drosophila melanogaster (Fruit fly)).